We begin with the raw amino-acid sequence, 305 residues long: Heme A synthase (305 aa).

Residues 1–6 (MKKFLK) lie on the Cytoplasmic side of the membrane. A helical membrane pass occupies residues 7 to 27 (VWSVLTIICMTVVVFGGALVT). The Extracellular portion of the chain corresponds to 28-63 (KTGSADGCGNSWPLCNGQLVRLTDVTPEKLIEFMHR). Residues Cys-35 and Cys-42 are joined by a disulfide bond. Residue Glu-59 is part of the active site. Residue His-62 coordinates heme o. A helical transmembrane segment spans residues 64–84 (MTTGISSIFVIVLAICAWIYM). Over 85 to 92 (KNRRETKP) the chain is Cytoplasmic. Residues 93–113 (LAIIAVLFLIIQALMGMAAVV) traverse the membrane as a helical segment. The Extracellular segment spans residues 114-122 (WGQNPYIMA). A helical transmembrane segment spans residues 123–143 (LHFGISIICYASIVLLALMIF). His-124 serves as a coordination point for heme o. Topologically, residues 144-160 (EVDRKFDARNLVMGTKL) are cytoplasmic. A helical transmembrane segment spans residues 161–181 (RINIYALTIYTYLAVYTGALV). The Extracellular segment spans residues 182–212 (RHEKASMAVPVWPFENGKFIMPDSVQDYVQY). Residues 213–233 (FHRVAAFILIVWLLYVTWLVF) traverse the membrane as a helical segment. Residue His-214 coordinates heme b. The Cytoplasmic portion of the chain corresponds to 234-240 (RDYRRYR). A helical transmembrane segment spans residues 241–261 (VLTFSMVLSLLFIALQAVTGA). Over 262 to 271 (LSVYTGVNLY) the chain is Extracellular. The chain crosses the membrane as a helical span at residues 272 to 292 (IALAHSLIITMLFALLCYLCL). A heme b-binding site is contributed by His-276. Residues 293-305 (LASRSKSNRLRIK) lie on the Cytoplasmic side of the membrane.

Belongs to the COX15/CtaA family. Type 1 subfamily. Interacts with CtaB. Requires heme b as cofactor.

It is found in the cell membrane. The enzyme catalyses Fe(II)-heme o + 2 A + H2O = Fe(II)-heme a + 2 AH2. The protein operates within porphyrin-containing compound metabolism; heme A biosynthesis; heme A from heme O: step 1/1. Functionally, catalyzes the conversion of heme O to heme A by two successive hydroxylations of the methyl group at C8. The first hydroxylation forms heme I, the second hydroxylation results in an unstable dihydroxymethyl group, which spontaneously dehydrates, resulting in the formyl group of heme A. This Listeria welshimeri serovar 6b (strain ATCC 35897 / DSM 20650 / CCUG 15529 / CIP 8149 / NCTC 11857 / SLCC 5334 / V8) protein is Heme A synthase.